Consider the following 276-residue polypeptide: Biotin synthase (276 aa).

One can recognise a Radical SAM core domain in the interval 1–226 (MKKIYLCAIS…EAIIMLAGGR (226 aa)). [4Fe-4S] cluster contacts are provided by C17, C21, and C24. The [2Fe-2S] cluster site is built by C61, C95, and C153.

Belongs to the radical SAM superfamily. Biotin synthase family. As to quaternary structure, homodimer. Requires [4Fe-4S] cluster as cofactor. It depends on [2Fe-2S] cluster as a cofactor.

The catalysed reaction is (4R,5S)-dethiobiotin + (sulfur carrier)-SH + 2 reduced [2Fe-2S]-[ferredoxin] + 2 S-adenosyl-L-methionine = (sulfur carrier)-H + biotin + 2 5'-deoxyadenosine + 2 L-methionine + 2 oxidized [2Fe-2S]-[ferredoxin]. It functions in the pathway cofactor biosynthesis; biotin biosynthesis; biotin from 7,8-diaminononanoate: step 2/2. Its function is as follows. Catalyzes the conversion of dethiobiotin (DTB) to biotin by the insertion of a sulfur atom into dethiobiotin via a radical-based mechanism. The polypeptide is Biotin synthase (Nautilia profundicola (strain ATCC BAA-1463 / DSM 18972 / AmH)).